The chain runs to 132 residues: MDYVITTGKRKTAVARAVVKKGKGIITINGTPAELYPVEVLRNKILEPVKLAEDKAKGIDVTVKVKGGGVTGQADASRTAIARGIVKFLQDNELENLFRQYDRTLIVNDVRIKLPKKPGGRGARAKKQKSYR.

This sequence belongs to the universal ribosomal protein uS9 family.

This chain is Small ribosomal subunit protein uS9 (rps9), found in Thermoplasma volcanium (strain ATCC 51530 / DSM 4299 / JCM 9571 / NBRC 15438 / GSS1).